Reading from the N-terminus, the 784-residue chain is Toll-like receptor 2 (784 aa).

The signal sequence occupies residues M1–G20. The Extracellular segment spans residues A21–R587. Cysteines 30 and 36 form a disulfide. 19 LRR repeats span residues V54–N77, L78–N101, L102–V125, L126–D150, L151–F175, L176–N199, I200–S223, L224–S250, V251–G278, I279–N308, V309–K337, V338–S361, L362–F388, L389–N414, L415–K437, M438–Q457, T458–Q478, L479–V500, and L501–Q524. N114 carries N-linked (GlcNAc...) asparagine glycosylation. Residue N199 is glycosylated (N-linked (GlcNAc...) asparagine). C353 and C382 are joined by a disulfide. C432 and C454 are disulfide-bonded. A glycan (N-linked (GlcNAc...) asparagine) is linked at N442. The 55-residue stretch at L525–R579 folds into the LRRCT domain. A helical membrane pass occupies residues A588–L608. Residues C609–S784 lie on the Cytoplasmic side of the membrane. The TIR domain occupies I639–I782. K754 is covalently cross-linked (Glycyl lysine isopeptide (Lys-Gly) (interchain with G-Cter in ubiquitin)). Positions Y761–L778 match the ATG16L1-binding motif motif.

Belongs to the Toll-like receptor family. Interacts with LY96, TLR1 and TLR6 (via extracellular domain). TLR2 seems to exist in heterodimers with either TLR1 or TLR6 before stimulation by the ligand. The heterodimers form bigger oligomers in response to their corresponding ligands as well as further heterotypic associations with other receptors such as CD14 and/or CD36. Binds MYD88 (via TIR domain). Interacts with TICAM1. Interacts with CNPY3. Interacts with ATG16L1. Interacts with PPP1R11. Interacts with TICAM2. Interacts with TIRAP. Post-translationally, ubiquitinated at Lys-754 by PPP1R11, leading to its degradation. Deubiquitinated by USP2. In terms of processing, glycosylation of Asn-442 is critical for secretion of the N-terminal ectodomain of TLR2.

It is found in the membrane. Its subcellular location is the cytoplasmic vesicle. It localises to the phagosome membrane. The protein localises to the membrane raft. Its function is as follows. Cooperates with LY96 to mediate the innate immune response to bacterial lipoproteins and other microbial cell wall components. Cooperates with TLR1 or TLR6 to mediate the innate immune response to bacterial lipoproteins or lipopeptides. Acts via MYD88 and TRAF6, leading to NF-kappa-B activation, cytokine secretion and the inflammatory response. May also promote apoptosis in response to lipoproteins. Forms activation clusters composed of several receptors depending on the ligand, these clusters trigger signaling from the cell surface and subsequently are targeted to the Golgi in a lipid-raft dependent pathway. Forms the cluster TLR2:TLR6:CD14:CD36 in response to diacylated lipopeptides and TLR2:TLR1:CD14 in response to triacylated lipopeptides. The sequence is that of Toll-like receptor 2 (TLR2) from Boselaphus tragocamelus (Nilgai).